A 318-amino-acid polypeptide reads, in one-letter code: Ribosomal RNA small subunit methyltransferase H (318 aa).

S-adenosyl-L-methionine-binding positions include 37-39, aspartate 57, phenylalanine 83, aspartate 104, and glutamine 111; that span reads GGH.

This sequence belongs to the methyltransferase superfamily. RsmH family.

It localises to the cytoplasm. The enzyme catalyses cytidine(1402) in 16S rRNA + S-adenosyl-L-methionine = N(4)-methylcytidine(1402) in 16S rRNA + S-adenosyl-L-homocysteine + H(+). Specifically methylates the N4 position of cytidine in position 1402 (C1402) of 16S rRNA. The protein is Ribosomal RNA small subunit methyltransferase H of Neisseria gonorrhoeae (strain ATCC 700825 / FA 1090).